The chain runs to 497 residues: Glycerol kinase (497 aa).

Thr-12 provides a ligand contact to ADP. Residues Thr-12, Thr-13, and Ser-14 each coordinate ATP. Thr-12 lines the sn-glycerol 3-phosphate pocket. Residue Arg-16 participates in ADP binding. Sn-glycerol 3-phosphate-binding residues include Arg-82, Glu-83, Tyr-132, and Asp-239. The glycerol site is built by Arg-82, Glu-83, Tyr-132, Asp-239, and Gln-240. Residues Thr-261 and Gly-303 each coordinate ADP. ATP contacts are provided by Thr-261, Gly-303, Gln-307, and Gly-402. Residues Gly-402 and Asn-406 each contribute to the ADP site.

Belongs to the FGGY kinase family. In terms of assembly, homodimer.

The enzyme catalyses glycerol + ATP = sn-glycerol 3-phosphate + ADP + H(+). It functions in the pathway polyol metabolism; glycerol degradation via glycerol kinase pathway; sn-glycerol 3-phosphate from glycerol: step 1/1. In terms of biological role, key enzyme in the regulation of glycerol uptake and metabolism. Catalyzes the phosphorylation of glycerol to yield sn-glycerol 3-phosphate. Can utilize other nucleoside triphosphates (GTP, CTP, UTP and ITP) as a phosphoryl donor. The chain is Glycerol kinase from Thermococcus kodakarensis (strain ATCC BAA-918 / JCM 12380 / KOD1) (Pyrococcus kodakaraensis (strain KOD1)).